The chain runs to 461 residues: BSD domain-containing protein 1 (461 aa).

A phosphoserine mark is found at serine 123 and serine 197. Positions 177–229 (WLSQFCLEEKKGEISELLVGSPSIRALYTKMVPAAVSHSEFWHRYFYKVHQLE) constitute a BSD domain. Residues 239–384 (KQRAEQSISE…SGPEPRPPAR (146 aa)) form a disordered region. Over residues 250–259 (PGWEEEEEEL) the composition is skewed to acidic residues. The span at 295–318 (LVTPVEPPTEVTPSESSESVSLVT) shows a compositional bias: low complexity. Threonine 387 is subject to Phosphothreonine. The disordered stretch occupies residues 398–430 (VFELNSDSGKSTPSNNGKKGSSTDISEDWEKDF). A compositionally biased stretch (polar residues) spans 402-421 (NSDSGKSTPSNNGKKGSSTD). 3 positions are modified to phosphoserine: serine 418, serine 419, and serine 449.

The chain is BSD domain-containing protein 1 (BSDC1) from Bos taurus (Bovine).